Consider the following 880-residue polypeptide: Alanine--tRNA ligase (880 aa).

Positions 563, 567, 673, and 677 each coordinate Zn(2+).

The protein belongs to the class-II aminoacyl-tRNA synthetase family. The cofactor is Zn(2+).

Its subcellular location is the cytoplasm. The catalysed reaction is tRNA(Ala) + L-alanine + ATP = L-alanyl-tRNA(Ala) + AMP + diphosphate. Functionally, catalyzes the attachment of alanine to tRNA(Ala) in a two-step reaction: alanine is first activated by ATP to form Ala-AMP and then transferred to the acceptor end of tRNA(Ala). Also edits incorrectly charged Ser-tRNA(Ala) and Gly-tRNA(Ala) via its editing domain. The chain is Alanine--tRNA ligase from Caulobacter vibrioides (strain ATCC 19089 / CIP 103742 / CB 15) (Caulobacter crescentus).